A 173-amino-acid chain; its full sequence is Photosystem I assembly protein Ycf3 (173 aa).

TPR repeat units follow at residues 35 to 68, 72 to 105, and 120 to 153; these read AFVY…EEDT, GYIL…NPRL, and GEKA…APNN.

This sequence belongs to the Ycf3 family.

Its subcellular location is the cellular thylakoid membrane. In terms of biological role, essential for the assembly of the photosystem I (PSI) complex. May act as a chaperone-like factor to guide the assembly of the PSI subunits. This Trichormus variabilis (strain ATCC 29413 / PCC 7937) (Anabaena variabilis) protein is Photosystem I assembly protein Ycf3.